A 718-amino-acid polypeptide reads, in one-letter code: Protein Hook homolog 3 (718 aa).

N-acetylmethionine is present on Met-1. The interval 1 to 164 is sufficient for interaction with microtubules; sequence MFSVESLERA…QELMSKESPV (164 aa). Ser-3 and Ser-6 each carry phosphoserine. The Calponin-homology (CH) domain occupies 10–126; sequence AELCESLLTW…RMLQLILGCA (117 aa). 2 coiled-coil regions span residues 167–433 and 462–667; these read GNDA…VQAQ and EIRE…YIVS. Ser-238 carries the phosphoserine modification. A required for association with Golgi region spans residues 553-718; that stretch reads EKLHEANNEL…PGHVQPATAR (166 aa). The required for interaction with MSR1 stretch occupies residues 556-718; sequence HEANNELQKK…PGHVQPATAR (163 aa). Positions 682 to 718 are disordered; sequence EDRLASTGSGQSFLARQRQATSSRRSYPGHVQPATAR. Phosphoserine occurs at positions 693 and 707. Low complexity predominate over residues 696 to 707; it reads ARQRQATSSRRS.

It belongs to the hook family. Self-associates. Component of the FTS/Hook/FHIP complex (FHF complex), composed of AKTIP/FTS, FHIP1B, and one or more members of the Hook family of proteins HOOK1, HOOK2, and HOOK3. May interact directly with AKTIP/FTS, HOOK1 and HOOK2. Associates with several subunits of the homotypic vesicular sorting complex (the HOPS complex) including VPS16 and VPS41; these interactions may be indirect. Interacts with MSR1, and this association is stimulated by ligand binding to MSR1. Interacts with microtubules. Part of a tripartite complex with dynein and dynactin, acts an adapter linking the dynein motor complex and dynactin. Interacts with dynein intermediate chain and dynactin (DCTN1). Interacts with CCDC181. Interacts with LRGUK. As to quaternary structure, (Microbial infection) Interacts with Salmonella typhimurium spiC.

It is found in the cytoplasm. The protein resides in the cytoskeleton. It localises to the golgi apparatus. Acts as an adapter protein linking the dynein motor complex to various cargos and converts dynein from a non-processive to a highly processive motor in the presence of dynactin. Facilitates the interaction between dynein and dynactin and activates dynein processivity (the ability to move along a microtubule for a long distance without falling off the track). Predominantly recruits 2 dyneins, which increases both the force and speed of the microtubule motor. Component of the FTS/Hook/FHIP complex (FHF complex). The FHF complex may function to promote vesicle trafficking and/or fusion via the homotypic vesicular protein sorting complex (the HOPS complex). May regulate clearance of endocytosed receptors such as MSR1. Participates in defining the architecture and localization of the Golgi complex. FHF complex promotes the distribution of AP-4 complex to the perinuclear area of the cell. Functionally, (Microbial infection) May serve as a target for the spiC protein from Salmonella typhimurium, which inactivates it, leading to a strong alteration in cellular trafficking. In Homo sapiens (Human), this protein is Protein Hook homolog 3.